A 304-amino-acid polypeptide reads, in one-letter code: Porphobilinogen deaminase (304 aa).

Cysteine 241 carries the S-(dipyrrolylmethanemethyl)cysteine modification.

Belongs to the HMBS family. In terms of assembly, monomer. The cofactor is dipyrromethane.

It carries out the reaction 4 porphobilinogen + H2O = hydroxymethylbilane + 4 NH4(+). It functions in the pathway porphyrin-containing compound metabolism; protoporphyrin-IX biosynthesis; coproporphyrinogen-III from 5-aminolevulinate: step 2/4. Tetrapolymerization of the monopyrrole PBG into the hydroxymethylbilane pre-uroporphyrinogen in several discrete steps. This Vesicomyosocius okutanii subsp. Calyptogena okutanii (strain HA) protein is Porphobilinogen deaminase.